A 67-amino-acid chain; its full sequence is Conotoxin TxMMSK-01 (67 aa).

Residues 1–20 form the signal peptide; sequence MMSKLGVLLITCLLLFPLTA. Residues 21-53 constitute a propeptide that is removed on maturation; it reads VPLDGDQPADQPAERLQDDISSENHPFFDPVKR. Disulfide bonds link cysteine 54–cysteine 66, cysteine 55–cysteine 62, and cysteine 59–cysteine 65. Proline 64 is subject to 4-hydroxyproline. Cysteine 66 is modified (cysteine amide).

The protein belongs to the conotoxin M superfamily. Expressed by the venom duct.

It localises to the secreted. This Conus textile (Cloth-of-gold cone) protein is Conotoxin TxMMSK-01.